Here is a 559-residue protein sequence, read N- to C-terminus: MLDRLAFLQQLPLLLKGTSDDDTPCPGYLYEEFAKISYESVGSCQCLLEYLLNRLQTSSCHVKLKVLKILLSLCFHGSPQFIQDLRRNSAYIQEAAAVSGPPDPLHGISLYQKVRVTAQEIVGNLFSESIPSPSHTVSAKERSQSGMGSQASSAPALHGFGYSQEEKNLGNSKDTFLNGIQRAAVAVTHSVLPGAGLSHTHACERADDAYKPVAIPSTDRRPLPGNSLPTSAHRGCHRSGVPGGGWDESDSGNSSQESPHDKSPLSRSSDVGSKSGSDGQSRNSQRESLDITDRVEFTHLSDCQQEARLVQEVTWGKRVFLTQEESQQFVRGCSLLNCEVVFEMLNCSLTDDSNCIKLRSMCAISSLMASDLLSHEHMLAVVRQNLQTLTGGPPGPVKDKATKILRQFQALTQNFSERGAVHHETSPSPTTHCSLDLFADVIPHSVVSGLLTSLSVPSSPTLNVQNTVCSLPNGAANQKNPNGSTEKSDPAEELRVETGDHISTNIHVSLFEGMELVGTMKCSHKEDTIGYRAGGLSVEPAKEEPSKPTLSSVFSFLNT.

The ENTH domain occupies 2–135; that stretch reads LDRLAFLQQL…FSESIPSPSH (134 aa). Disordered regions lie at residues 131–157, 214–290, and 472–491; these read PSPSHTVSAKERSQSGMGSQASSAPAL, AIPS…ESLD, and PNGAANQKNPNGSTEKSDPA. Composition is skewed to low complexity over residues 144-154 and 266-281; these read QSGMGSQASSA and SRSSDVGSKSGSDGQS. Over residues 472–485 the composition is skewed to polar residues; it reads PNGAANQKNPNGST.

The protein resides in the golgi apparatus. It is found in the trans-Golgi network membrane. The protein localises to the cytoplasmic vesicle. It localises to the cytoplasm. Its subcellular location is the cytosol. Its function is as follows. May play a role in vesicular trafficking of proteins at the trans-Golgi network. The protein is AP-4 complex accessory subunit tepsin of Xenopus laevis (African clawed frog).